The sequence spans 209 residues: MGTEMVMVHEVPFPPQIITSKPLSLLGQGITDIEIHFLQVKFTAIGVYLDPSDVKTHLDNWKGKTGKELAGDDDFFDALASAEMEKVIRVVVIKEIKGAQYGVQLENTVRDRLAEEDKYEEEEETELEKVVGFFQSKYFKANSVITYHFSAKDGICEIGFETEGKEEEKLKVENANVVGMMQRWYLSGSRGVSPSTIVSIADSISAVLT.

This sequence belongs to the chalcone isomerase family.

It catalyses the reaction a chalcone = a flavanone.. It functions in the pathway secondary metabolite biosynthesis; flavonoid biosynthesis. Functionally, involved in anthocyanin biosynthesis. This chain is Probable chalcone--flavanone isomerase 3 (CHI3), found in Arabidopsis thaliana (Mouse-ear cress).